Reading from the N-terminus, the 416-residue chain is Histidine--tRNA ligase (416 aa).

The protein belongs to the class-II aminoacyl-tRNA synthetase family.

The protein localises to the cytoplasm. It carries out the reaction tRNA(His) + L-histidine + ATP = L-histidyl-tRNA(His) + AMP + diphosphate + H(+). In Methanocaldococcus jannaschii (strain ATCC 43067 / DSM 2661 / JAL-1 / JCM 10045 / NBRC 100440) (Methanococcus jannaschii), this protein is Histidine--tRNA ligase (hisS).